The following is a 476-amino-acid chain: 3-isopropylmalate dehydratase large subunit (476 aa).

The [4Fe-4S] cluster site is built by Cys-355, Cys-416, and Cys-419.

This sequence belongs to the aconitase/IPM isomerase family. LeuC type 1 subfamily. Heterodimer of LeuC and LeuD. Requires [4Fe-4S] cluster as cofactor.

It catalyses the reaction (2R,3S)-3-isopropylmalate = (2S)-2-isopropylmalate. It participates in amino-acid biosynthesis; L-leucine biosynthesis; L-leucine from 3-methyl-2-oxobutanoate: step 2/4. In terms of biological role, catalyzes the isomerization between 2-isopropylmalate and 3-isopropylmalate, via the formation of 2-isopropylmaleate. The sequence is that of 3-isopropylmalate dehydratase large subunit from Sphingopyxis alaskensis (strain DSM 13593 / LMG 18877 / RB2256) (Sphingomonas alaskensis).